The primary structure comprises 651 residues: Macrolide export ATP-binding/permease protein MacB (651 aa).

In terms of domain architecture, ABC transporter spans 2 to 239; it reads IEIVNVTKTY…PQMPQGGMEA (238 aa). 38 to 45 lines the ATP pocket; the sequence is GASGSGKS. The next 4 helical transmembrane spans lie at 269-289, 532-552, 589-609, and 614-634; these read FLSVLGILVGVASVIAMMALG, IAAISLVVGGIGIMNIMLVSV, IIGIVVGVGVSVMLSAFAGWA, and MFSVVLATGFSVLIGLFFGLW.

Belongs to the ABC transporter superfamily. Macrolide exporter (TC 3.A.1.122) family. In terms of assembly, homodimer.

Its subcellular location is the cell inner membrane. In terms of biological role, non-canonical ABC transporter that contains transmembrane domains (TMD), which form a pore in the inner membrane, and an ATP-binding domain (NBD), which is responsible for energy generation. Confers resistance against macrolides. This Chlorobaculum tepidum (strain ATCC 49652 / DSM 12025 / NBRC 103806 / TLS) (Chlorobium tepidum) protein is Macrolide export ATP-binding/permease protein MacB.